Consider the following 255-residue polypeptide: 5-oxoprolinase subunit A (255 aa).

This sequence belongs to the LamB/PxpA family. In terms of assembly, forms a complex composed of PxpA, PxpB and PxpC.

It catalyses the reaction 5-oxo-L-proline + ATP + 2 H2O = L-glutamate + ADP + phosphate + H(+). Its function is as follows. Catalyzes the cleavage of 5-oxoproline to form L-glutamate coupled to the hydrolysis of ATP to ADP and inorganic phosphate. The chain is 5-oxoprolinase subunit A from Rhodopseudomonas palustris (strain BisA53).